Here is a 63-residue protein sequence, read N- to C-terminus: Small ribosomal subunit protein bS21 (63 aa).

This sequence belongs to the bacterial ribosomal protein bS21 family.

This chain is Small ribosomal subunit protein bS21, found in Phocaeicola vulgatus (strain ATCC 8482 / DSM 1447 / JCM 5826 / CCUG 4940 / NBRC 14291 / NCTC 11154) (Bacteroides vulgatus).